The chain runs to 302 residues: Calpain-1 catalytic subunit (302 aa).

The tract at residues 1–114 is domain III; it reads RESGCSFVLA…KRAGTQELDD (114 aa). Positions 115–130 are linker; the sequence is QIQANLPDEQVLSAEE. The segment at 131 to 301 is domain IV; that stretch reads IDENFKALFR…LFKWLQLTMF (171 aa). EF-hand domains are found at residues 173 to 206, 203 to 238, and 268 to 302; these read FSME…NRIR, NRIR…AGFK, and VRLE…TMFA. Residues D186, D188, N190, K192, E197, D216, D218, S220, S222, and E227 each contribute to the Ca(2+) site.

Belongs to the peptidase C2 family. In terms of assembly, forms a heterodimer with a small (regulatory) subunit CAPNS1. Ca(2+) serves as cofactor. The N-terminus is blocked. Post-translationally, undergoes calcium-induced successive autoproteolytic cleavages that generate a membrane-bound 78 kDa active form and an intracellular 75 kDa active form. Calpastatin reduces with high efficiency the transition from 78 kDa to 75 kDa calpain forms. In terms of tissue distribution, ubiquitous.

The protein resides in the cytoplasm. It is found in the cell membrane. The enzyme catalyses Broad endopeptidase specificity.. With respect to regulation, activated by micromolar concentrations of calcium and inhibited by calpastatin. In terms of biological role, calcium-regulated non-lysosomal thiol-protease which catalyzes limited proteolysis of substrates involved in cytoskeletal remodeling and signal transduction. Proteolytically cleaves CTBP1. Cleaves and activates caspase-7 (CASP7). This is Calpain-1 catalytic subunit from Oryctolagus cuniculus (Rabbit).